We begin with the raw amino-acid sequence, 498 residues long: ATP synthase subunit beta, chloroplastic (498 aa).

Gly172–Thr179 provides a ligand contact to ATP.

Belongs to the ATPase alpha/beta chains family. F-type ATPases have 2 components, CF(1) - the catalytic core - and CF(0) - the membrane proton channel. CF(1) has five subunits: alpha(3), beta(3), gamma(1), delta(1), epsilon(1). CF(0) has four main subunits: a(1), b(1), b'(1) and c(9-12).

It localises to the plastid. It is found in the chloroplast thylakoid membrane. It catalyses the reaction ATP + H2O + 4 H(+)(in) = ADP + phosphate + 5 H(+)(out). Functionally, produces ATP from ADP in the presence of a proton gradient across the membrane. The catalytic sites are hosted primarily by the beta subunits. The polypeptide is ATP synthase subunit beta, chloroplastic (Chamaerops humilis (Mediterranean fan palm)).